Consider the following 298-residue polypeptide: tRNA dimethylallyltransferase (298 aa).

An ATP-binding site is contributed by Gly10–Thr17. Thr12 to Thr17 is a substrate binding site. Residues Asp35–Cys38 are interaction with substrate tRNA.

The protein belongs to the IPP transferase family. In terms of assembly, monomer. Requires Mg(2+) as cofactor.

The enzyme catalyses adenosine(37) in tRNA + dimethylallyl diphosphate = N(6)-dimethylallyladenosine(37) in tRNA + diphosphate. Its function is as follows. Catalyzes the transfer of a dimethylallyl group onto the adenine at position 37 in tRNAs that read codons beginning with uridine, leading to the formation of N6-(dimethylallyl)adenosine (i(6)A). The polypeptide is tRNA dimethylallyltransferase (Hydrogenobaculum sp. (strain Y04AAS1)).